The sequence spans 199 residues: UPF0462 protein C4orf33 (199 aa).

The protein belongs to the UPF0462 family.

This is UPF0462 protein C4orf33 (C4orf33) from Homo sapiens (Human).